A 466-amino-acid polypeptide reads, in one-letter code: Vimentin (466 aa).

The segment covering 1–13 (MSTRSVSSSSYRR) has biased composition (low complexity). Positions 1 to 31 (MSTRSVSSSSYRRMFGGPGTASRPSSTRSYV) are disordered. Ser-2 is subject to N-acetylserine. The tract at residues 2–95 (STRSVSSSSY…FSLADAINTE (94 aa)) is head. Ser-5 carries the post-translational modification Phosphoserine. Ser-7 bears the Phosphoserine; by PKA and PKC; alternate mark. A glycan (O-linked (GlcNAc) serine; alternate) is linked at Ser-7. At Ser-8 the chain carries Phosphoserine. 2 positions are modified to phosphoserine; by PKC: Ser-9 and Ser-10. Phosphothreonine is present on Thr-20. Position 25 is a phosphoserine; by PKA and PKC (Ser-25). Phosphoserine; by PKC is present on Ser-26. O-linked (GlcNAc) threonine glycosylation occurs at Thr-33. O-linked (GlcNAc) serine; alternate glycosylation is present at Ser-34. Residue Ser-34 is modified to Phosphoserine; by PKC; alternate. Phosphoserine; by CaMK2, PKA, PKC and ROCK2 is present on Ser-39. Ser-42 carries the phosphoserine; by PKC modification. Residue Ser-49 is modified to Phosphoserine. Tyr-53 carries the phosphotyrosine modification. Ser-55 carries the phosphoserine modification. At Ser-56 the chain carries Phosphoserine; by CDK5 and CDK1. The residue at position 61 (Tyr-61) is a Phosphotyrosine. Position 66 is a phosphoserine; by PKA and PKC (Ser-66). At Ser-72 the chain carries Phosphoserine; by AURKB and ROCK2. The residue at position 83 (Ser-83) is a Phosphoserine; by CaMK2. Ser-87 is subject to Phosphoserine. The interval 96–131 (FKNTRTNEKVELQELNDRFANYIDKVRFLEQQNKIL) is coil 1A. Residues 96 to 131 (FKNTRTNEKVELQELNDRFANYIDKVRFLEQQNKIL) are a coiled coil. The region spanning 103–411 (EKVELQELND…KLLEGEESRI (309 aa)) is the IF rod domain. Residue Lys-104 forms a Glycyl lysine isopeptide (Lys-Gly) (interchain with G-Cter in SUMO2) linkage. Tyr-117 bears the Phosphotyrosine mark. Lys-120, Lys-129, and Lys-139 each carry N6-acetyllysine; alternate. Residues Lys-120 and Lys-129 each carry the N6-succinyllysine; alternate modification. Residues Lys-120, Lys-129, and Lys-139 each participate in a glycyl lysine isopeptide (Lys-Gly) (interchain with G-Cter in SUMO2); alternate cross-link. A linker 1 region spans residues 132–153 (LAELEQLKGQGKSRLGDLYEEE). Ser-144 carries the phosphoserine modification. A coiled-coil region spans residues 154–245 (MRELRRQVDQ…KLHDEEIQEL (92 aa)). The coil 1B stretch occupies residues 154-245 (MRELRRQVDQ…KLHDEEIQEL (92 aa)). Lys-168 bears the N6-acetyllysine mark. Residue Lys-188 is modified to N6-acetyllysine; alternate. Lys-188 is modified (N6-succinyllysine; alternate). Residue Ser-214 is modified to Phosphoserine. Residue Lys-223 is modified to N6-acetyllysine; alternate. Lys-223 is covalently cross-linked (Glycyl lysine isopeptide (Lys-Gly) (interchain with G-Cter in SUMO2); alternate). Position 226 is a phosphoserine (Ser-226). At Lys-235 the chain carries N6-acetyllysine. Residues 246–268 (QAQIQEQHVQIDMDVSKPDLTAA) are linker 12. Lys-262 participates in a covalent cross-link: Glycyl lysine isopeptide (Lys-Gly) (interchain with G-Cter in SUMO2). Residues 269-407 (LRDVRQQYES…ATYRKLLEGE (139 aa)) form a coil 2 region. Lys-294 bears the N6-acetyllysine; alternate mark. Residue Lys-294 is modified to N6-succinyllysine; alternate. Residue Lys-294 forms a Glycyl lysine isopeptide (Lys-Gly) (interchain with G-Cter in SUMO2); alternate linkage. At Ser-299 the chain carries Phosphoserine. Positions 303–407 (NRNNDALRQA…ATYRKLLEGE (105 aa)) form a coiled coil. A Glycyl lysine isopeptide (Lys-Gly) (interchain with G-Cter in SUMO2) cross-link involves residue Lys-313. A [IL]-x-C-x-x-[DE] motif motif is present at residues 326-329 (LTCE). Position 373 is an N6-acetyllysine; alternate (Lys-373). A Glycyl lysine isopeptide (Lys-Gly) (interchain with G-Cter in SUMO2); alternate cross-link involves residue Lys-373. A tail region spans residues 408–466 (ESRISLPLPNFSSLNLRETNLDSLPLVDTHSKRTLLIKTVETRDGQVINETSQHHDDLE). A phosphoserine mark is found at Ser-409, Ser-412, Ser-419, and Ser-420. Thr-426 carries the phosphothreonine modification. Phosphoserine is present on Ser-430. At Thr-436 the chain carries Phosphothreonine. Ser-438 carries the phosphoserine modification. Lys-439 is covalently cross-linked (Glycyl lysine isopeptide (Lys-Gly) (interchain with G-Cter in SUMO2)). Position 445 is an N6-acetyllysine; alternate (Lys-445). Residue Lys-445 is modified to N6-succinyllysine; alternate. Lys-445 is covalently cross-linked (Glycyl lysine isopeptide (Lys-Gly) (interchain with G-Cter in SUMO2); alternate). Lys-445 is covalently cross-linked (Glycyl lysine isopeptide (Lys-Gly) (interchain with G-Cter in SUMO1); alternate). 2 positions are modified to phosphothreonine: Thr-446 and Thr-458. At Ser-459 the chain carries Phosphoserine.

The protein belongs to the intermediate filament family. As to quaternary structure, homomer assembled from elementary dimers. Identified in complexes that contain VIM, EZR, AHNAK, BFSP1, BFSP2, ANK2, PLEC, PRX and spectrin. Interacts with BCAS3. Interacts with LGSN. Interacts with SYNM. Interacts (via rod region) with PLEC (via CH 1 domain). Interacts with STK33. Interacts with LARP6. Interacts with RAB8B. Interacts with TOR1A; the interaction associates TOR1A with the cytoskeleton. Interacts with TOR1AIP1. Interacts with TOR1AIP1. Interacts with DIAPH1. Interacts with EPPK1; interaction is dependent of higher-order structure of intermediate filament. Interacts with the non-receptor tyrosine kinase SRMS; the interaction leads to phosphorylation of VIM. Interacts with NOD2. Interacts (via head region) with CORO1C. Interacts with HDGF. Interacts with PRKCE (via phorbol-ester/DAG-type 2 domain). Interacts with BFSP2. Interacts with PPL. Interacts with PKP1 and PKP2. Interacts with SCRIB (via PDZ domains); the interaction protects SCRIB from proteasomal degradation and facilitates SCRIB localization to intermediate filaments, the interaction is reduced by cell contact inhibition. One of the most prominent phosphoproteins in various cells of mesenchymal origin. Phosphorylation is enhanced during cell division, at which time vimentin filaments are significantly reorganized. Phosphorylation by PKN1 inhibits the formation of filaments. Filament disassembly during mitosis is promoted by phosphorylation at Ser-55 as well as by nestin. Phosphorylated at Ser-56 by CDK5 during neutrophil secretion in the cytoplasm. Phosphorylated by STK33. Phosphorylated on tyrosine residues by SRMS. Post-translationally, S-nitrosylation is induced by interferon-gamma and oxidatively-modified low-densitity lipoprotein (LDL(ox)) possibly implicating the iNOS-S100A8/9 transnitrosylase complex.

Its subcellular location is the cytoplasm. It localises to the cytoskeleton. The protein localises to the nucleus matrix. The protein resides in the cell membrane. In terms of biological role, vimentins are class-III intermediate filaments found in various non-epithelial cells, especially mesenchymal cells. Vimentin is attached to the nucleus, endoplasmic reticulum, and mitochondria, either laterally or terminally. Plays a role in cell directional movement, orientation, cell sheet organization and Golgi complex polarization at the cell migration front. Protects SCRIB from proteasomal degradation and facilitates its localization to intermediate filaments in a cell contact-mediated manner. Involved with LARP6 in the stabilization of type I collagen mRNAs for CO1A1 and CO1A2. This is Vimentin (VIM) from Bos taurus (Bovine).